The chain runs to 426 residues: Enolase (426 aa).

Position 163 (Gln-163) interacts with (2R)-2-phosphoglycerate. Glu-205 (proton donor) is an active-site residue. Residues Asp-242, Glu-285, and Asp-312 each coordinate Mg(2+). 4 residues coordinate (2R)-2-phosphoglycerate: Lys-337, Arg-366, Ser-367, and Lys-388. The Proton acceptor role is filled by Lys-337.

The protein belongs to the enolase family. Mg(2+) is required as a cofactor.

It localises to the cytoplasm. The protein localises to the secreted. Its subcellular location is the cell surface. The enzyme catalyses (2R)-2-phosphoglycerate = phosphoenolpyruvate + H2O. Its pathway is carbohydrate degradation; glycolysis; pyruvate from D-glyceraldehyde 3-phosphate: step 4/5. Catalyzes the reversible conversion of 2-phosphoglycerate (2-PG) into phosphoenolpyruvate (PEP). It is essential for the degradation of carbohydrates via glycolysis. This chain is Enolase, found in Nitrobacter winogradskyi (strain ATCC 25391 / DSM 10237 / CIP 104748 / NCIMB 11846 / Nb-255).